The following is a 63-amino-acid chain: Prokaryotic ubiquitin-like protein Pup (63 aa).

Polar residues predominate over residues 1–11 (MPQKFEQMQSA). The segment at 1 to 28 (MPQKFEQMQSAEQKHDEDETIAQAGTQI) is disordered. The tract at residues 19-57 (ETIAQAGTQIDDTVDALDAVLDDIESVLESNAEEYVGSF) is ARC ATPase binding. An Isoglutamyl lysine isopeptide (Glu-Lys) (interchain with K-? in acceptor proteins) cross-link involves residue Glu-63.

It belongs to the prokaryotic ubiquitin-like protein family. As to quaternary structure, strongly interacts with the proteasome-associated ATPase ARC through a hydrophobic interface; the interacting region of Pup lies in its C-terminal half. There is one Pup binding site per ARC hexamer ring.

It participates in protein degradation; proteasomal Pup-dependent pathway. Protein modifier that is covalently attached to lysine residues of substrate proteins, thereby targeting them for proteasomal degradation. The tagging system is termed pupylation. This Bifidobacterium adolescentis (strain ATCC 15703 / DSM 20083 / NCTC 11814 / E194a) protein is Prokaryotic ubiquitin-like protein Pup (pup).